The chain runs to 89 residues: Cell division topological specificity factor (89 aa).

The protein belongs to the MinE family.

In terms of biological role, prevents the cell division inhibition by proteins MinC and MinD at internal division sites while permitting inhibition at polar sites. This ensures cell division at the proper site by restricting the formation of a division septum at the midpoint of the long axis of the cell. In Yersinia pestis bv. Antiqua (strain Angola), this protein is Cell division topological specificity factor.